A 430-amino-acid polypeptide reads, in one-letter code: Glutamate-1-semialdehyde 2,1-aminomutase (430 aa).

Position 265 is an N6-(pyridoxal phosphate)lysine (Lys-265).

Belongs to the class-III pyridoxal-phosphate-dependent aminotransferase family. HemL subfamily. In terms of assembly, homodimer. The cofactor is pyridoxal 5'-phosphate.

The protein localises to the cytoplasm. It carries out the reaction (S)-4-amino-5-oxopentanoate = 5-aminolevulinate. It functions in the pathway porphyrin-containing compound metabolism; protoporphyrin-IX biosynthesis; 5-aminolevulinate from L-glutamyl-tRNA(Glu): step 2/2. This chain is Glutamate-1-semialdehyde 2,1-aminomutase, found in Shewanella sp. (strain ANA-3).